Consider the following 173-residue polypeptide: Putative metal-dependent hydrolase BCE33L2441 (173 aa).

Histidine 65, histidine 156, and histidine 160 together coordinate Zn(2+).

Belongs to the metal hydrolase YfiT family. In terms of assembly, homodimer. Zn(2+) is required as a cofactor.

It is found in the cytoplasm. Functionally, possible metal-dependent hydrolase. The chain is Putative metal-dependent hydrolase BCE33L2441 from Bacillus cereus (strain ZK / E33L).